The sequence spans 771 residues: Probable exo-1,4-beta-xylosidase xlnD (771 aa).

Positions 1-25 (MARIMSWHYGKAITLFVCLGPVALS) are cleaved as a signal peptide. A glycan (N-linked (GlcNAc...) asparagine) is linked at N67. D293 is an active-site residue. Residues N305, N345, N423, and N464 are each glycosylated (N-linked (GlcNAc...) asparagine).

It belongs to the glycosyl hydrolase 3 family.

The protein resides in the secreted. It catalyses the reaction Hydrolysis of (1-&gt;4)-beta-D-xylans, to remove successive D-xylose residues from the non-reducing termini.. The protein operates within glycan degradation; xylan degradation. Functionally, xylan 1,4-beta-xylosidase involved in the hydrolysis of xylan, a major structural heterogeneous polysaccharide found in plant biomass representing the second most abundant polysaccharide in the biosphere, after cellulose. The sequence is that of Probable exo-1,4-beta-xylosidase xlnD (xlnD) from Neosartorya fischeri (strain ATCC 1020 / DSM 3700 / CBS 544.65 / FGSC A1164 / JCM 1740 / NRRL 181 / WB 181) (Aspergillus fischerianus).